The sequence spans 226 residues: Acyl-protein thioesterase 1 homolog 1 (226 aa).

Active-site charge relay system residues include Ser121, Asp174, and His206.

It belongs to the AB hydrolase superfamily. AB hydrolase 2 family.

The protein localises to the cytoplasm. The protein resides in the nucleus. The enzyme catalyses S-hexadecanoyl-L-cysteinyl-[protein] + H2O = L-cysteinyl-[protein] + hexadecanoate + H(+). In terms of biological role, hydrolyzes fatty acids from S-acylated cysteine residues in proteins with a strong preference for palmitoylated G-alpha proteins over other acyl substrates. Mediates the deacylation of G-alpha proteins such as GPA1 in vivo, but has weak or no activity toward palmitoylated Ras proteins. Has weak lysophospholipase activity in vitro; however such activity may not exist in vivo. The sequence is that of Acyl-protein thioesterase 1 homolog 1 from Dictyostelium discoideum (Social amoeba).